Reading from the N-terminus, the 475-residue chain is Tryptophan--tRNA ligase, cytoplasmic (475 aa).

Positions 12–68 (SPQELFSSIAAQGELVKSLKARKAPKEEIDSAVKMLLSLKTSYKEAMGEDYKADCPP) constitute a WHEP-TRS domain. The tract at residues 61 to 87 (DYKADCPPGNSTPDSHGDPEAVDDKED) is disordered. Lysine 158 carries the N6-succinyllysine modification. The 'HIGH' region motif lies at 168–177 (PSSEAMHVGH). The 'KMSKS' region motif lies at 353–357 (KMSAS). Serine 355 is subject to Phosphoserine.

The protein belongs to the class-I aminoacyl-tRNA synthetase family. As to quaternary structure, homodimer. Interacts with oxidized form of GAPDH. Proteolytic cleavage generates 2 forms; T1-TrpRS and T2-TrpRS.

The protein localises to the cytoplasm. The enzyme catalyses tRNA(Trp) + L-tryptophan + ATP = L-tryptophyl-tRNA(Trp) + AMP + diphosphate + H(+). Catalyzes the attachment of tryptophan to tRNA(Trp) in a two-step reaction: tryptophan is first activated by ATP to form Trp-AMP and then transferred to the acceptor end of the tRNA(Trp). Could also possess an angiostatic activity. The polypeptide is Tryptophan--tRNA ligase, cytoplasmic (WARS1) (Oryctolagus cuniculus (Rabbit)).